The primary structure comprises 504 residues: Sodium-coupled neutral amino acid symporter 2 (504 aa).

Positions 1 to 23 are disordered; sequence MKKTEMGRFNISPDEDSSSYSSN. Topologically, residues 1 to 76 are cytoplasmic; sequence MKKTEMGRFN…HPGTTSFGMS (76 aa). The regulates protein turnover upon amino acid deprivation stretch occupies residues 1-96; sequence MKKTEMGRFN…SGILGLSYAM (96 aa). Phosphoserine occurs at positions 12, 21, 22, and 55. The chain crosses the membrane as a helical span at residues 77–96; it reads VFNLSNAIVGSGILGLSYAM. Asparagine 82 lines the Na(+) pocket. The Extracellular portion of the chain corresponds to 97–102; the sequence is ANTGIA. A helical transmembrane segment spans residues 103–123; it reads LFIILLTFVSIFSLYSVHLLL. The Cytoplasmic portion of the chain corresponds to 124–158; sequence KTANEGGSLLYEQLGHKAYGLAGKLAASGSITMQN. The helical transmembrane segment at 159–177 threads the bilayer; it reads IGAMSSYLFIVKYELPLVI. The Extracellular portion of the chain corresponds to 178–188; the sequence is KALMNIEDTNG. Residues 189–209 traverse the membrane as a helical segment; sequence LWYLNGDYLVLLVSLVLILPL. Over 210–217 the chain is Cytoplasmic; that stretch reads SLLRNLGY. The chain crosses the membrane as a helical span at residues 218 to 238; sequence LGYTSGLSLLCMIFFLIVVIC. Residues 239-289 are Extracellular-facing; sequence KKFQIPCPVEAALVANETVNGTFTQAALALAFNSTADDACRPRYFIFNSQT. A disulfide bond links cysteine 245 and cysteine 278. Residues asparagine 254 and asparagine 258 are each glycosylated (N-linked (GlcNAc...) asparagine). The helical transmembrane segment at 290–310 threads the bilayer; that stretch reads VYAVPILTFSFVCHPAVLPIY. Over 311 to 326 the chain is Cytoplasmic; the sequence is EELKSRSRRRMMNVSK. Residues 327 to 347 form a helical membrane-spanning segment; the sequence is ISFFAMFLMYLLAALFGYLTF. Topologically, residues 348–368 are extracellular; the sequence is YGHVESELLHTYSEIVGTDIL. The chain crosses the membrane as a helical span at residues 369–389; the sequence is LLVVRLAVLVAVTLTVPVVIF. Residue threonine 383 coordinates Na(+). Residues 390–410 are Cytoplasmic-facing; it reads PIRSSVTHLLCPTKEFSWLRH. The helical transmembrane segment at 411-431 threads the bilayer; it reads SIITVTILSFTNLLVIFVPTI. Residues 432 to 433 lie on the Extracellular side of the membrane; the sequence is RD. The chain crosses the membrane as a helical span at residues 434–454; the sequence is IFGFIGASAAAMLIFILPSAF. The Cytoplasmic portion of the chain corresponds to 455-469; sequence YIKLVKKEPMRSVQK. The chain crosses the membrane as a helical span at residues 470-492; it reads IGALCFLLSGIVVMIGSMGLIVL. The Extracellular portion of the chain corresponds to 493–504; it reads DWVHDASAAGGH.

Belongs to the amino acid/polyamine transporter 2 family. Polyubiquitination by NEDD4L regulates the degradation and the activity of SLC38A2. In terms of tissue distribution, expressed in cerebral and cerebellar astrocytes and neurons.

The protein localises to the cell membrane. The catalysed reaction is L-alanine(in) + Na(+)(in) = L-alanine(out) + Na(+)(out). It catalyses the reaction glycine(in) + Na(+)(in) = glycine(out) + Na(+)(out). The enzyme catalyses L-serine(in) + Na(+)(in) = L-serine(out) + Na(+)(out). It carries out the reaction L-proline(in) + Na(+)(in) = L-proline(out) + Na(+)(out). The catalysed reaction is L-methionine(in) + Na(+)(in) = L-methionine(out) + Na(+)(out). It catalyses the reaction L-histidine(in) + Na(+)(in) = L-histidine(out) + Na(+)(out). The enzyme catalyses L-asparagine(in) + Na(+)(in) = L-asparagine(out) + Na(+)(out). It carries out the reaction L-glutamine(in) + Na(+)(in) = L-glutamine(out) + Na(+)(out). The catalysed reaction is L-threonine(in) + Na(+)(in) = L-threonine(out) + Na(+)(out). It catalyses the reaction L-leucine(in) + Na(+)(in) = L-leucine(out) + Na(+)(out). The enzyme catalyses L-phenylalanine(in) + Na(+)(in) = L-phenylalanine(out) + Na(+)(out). Inhibited by N-methyl-D-glucamine. Inhibited by choline. Allosteric regulation of sodium ions binding by pH. In terms of biological role, symporter that cotransports neutral amino acids and sodium ions from the extracellular to the intracellular side of the cell membrane. The transport is pH-sensitive, Li(+)-intolerant, electrogenic, driven by the Na(+) electrochemical gradient and cotransports of neutral amino acids and sodium ions with a stoichiometry of 1:1. May function in the transport of amino acids at the blood-brain barrier. May function in the transport of amino acids in the supply of maternal nutrients to the fetus through the placenta. Maintains a key metabolic glutamine/glutamate balance underpinning retrograde signaling by dendritic release of the neurotransmitter glutamate. Transports L-proline in differentiating osteoblasts for the efficient synthesis of proline-enriched proteins and provides proline essential for osteoblast differentiation and bone formation during bone development. This chain is Sodium-coupled neutral amino acid symporter 2, found in Mus musculus (Mouse).